The sequence spans 245 residues: Orotidine 5'-phosphate decarboxylase (245 aa).

Substrate-binding positions include Asp-22, Lys-44, 71 to 80, Thr-131, Arg-192, Gln-201, Gly-221, and Arg-222; that span reads DLKFHDIPNT. Lys-73 (proton donor) is an active-site residue.

Belongs to the OMP decarboxylase family. Type 1 subfamily. In terms of assembly, homodimer.

It carries out the reaction orotidine 5'-phosphate + H(+) = UMP + CO2. It participates in pyrimidine metabolism; UMP biosynthesis via de novo pathway; UMP from orotate: step 2/2. In terms of biological role, catalyzes the decarboxylation of orotidine 5'-monophosphate (OMP) to uridine 5'-monophosphate (UMP). The protein is Orotidine 5'-phosphate decarboxylase of Escherichia coli O6:K15:H31 (strain 536 / UPEC).